Here is a 232-residue protein sequence, read N- to C-terminus: A-type ATP synthase subunit D (232 aa).

Residues 200-232 (KKIKNKKEAEEEDEDEDESEMTDETVVQTPADD) form a disordered region. A compositionally biased stretch (acidic residues) spans 209–222 (EEEDEDEDESEMTD).

The protein belongs to the V-ATPase D subunit family. Has multiple subunits with at least A(3), B(3), C, D, E, F, H, I and proteolipid K(x).

It is found in the cell membrane. In terms of biological role, component of the A-type ATP synthase that produces ATP from ADP in the presence of a proton gradient across the membrane. This Haloquadratum walsbyi (strain DSM 16790 / HBSQ001) protein is A-type ATP synthase subunit D.